Reading from the N-terminus, the 110-residue chain is PCNA-associated factor (110 aa).

Residue Lys15 forms a Glycyl lysine isopeptide (Lys-Gly) (interchain with G-Cter in ubiquitin) linkage. The D-box motif lies at 23-34 (RKVLGSSTFVTN). N6-acetyllysine; alternate is present on Lys24. Lys24 is covalently cross-linked (Glycyl lysine isopeptide (Lys-Gly) (interchain with G-Cter in ubiquitin); alternate). Phosphoserine is present on residues Ser28 and Ser71. The span at 28–39 (SSTFVTNSSSSS) shows a compositional bias: low complexity. A disordered region spans residues 28-110 (SSTFVTNSSS…QPDHRDDENE (83 aa)). Positions 61-71 (QKGIGEFFRLS) match the PIP-box motif. Positions 71–80 (SPKESKKENQ) are enriched in basic and acidic residues. A KEN box motif is present at residues 77–79 (KEN). The Initiation motif motif lies at 84–96 (EAGTSGLGKAKRK).

As to quaternary structure, interacts (when monoubiquitinated at Lys-15 and Lys-24) with PCNA. Interacts with isoform 2/p33ING1b of ING1. Interacts with BRCA1. Monoubiquitinated at Lys-15 and Lys-24 during normal S phase, promoting its association with PCNA. Also diubiquitinated at these 2 sites. Following DNA damage, monoubiquitin chains at Lys-15 and Lys-24 are probably extended, leading to disrupt the interaction with PCNA. Polyubiquitinated by the APC/C complex at the mitotic exit, leading to its degradation by the proteasome.

It localises to the nucleus. The protein localises to the cytoplasm. It is found in the perinuclear region. Its function is as follows. PCNA-binding protein that acts as a regulator of DNA repair during DNA replication. Following DNA damage, the interaction with PCNA is disrupted, facilitating the interaction between monoubiquitinated PCNA and the translesion DNA synthesis DNA polymerase eta (POLH) at stalled replisomes, facilitating the bypass of replication-fork-blocking lesions. Also acts as a regulator of centrosome number. This is PCNA-associated factor from Mus musculus (Mouse).